Consider the following 195-residue polypeptide: Probable GTP-binding protein EngB (195 aa).

Residues 22–195 form the EngB-type G domain; sequence GRPEVALAGR…WAALLPFVAS (174 aa). Residues 30–37, 57–61, 75–78, 142–145, and 174–176 contribute to the GTP site; these read GRSNVGKS, GKTQT, DVPG, TKAD, and FSA. Mg(2+) contacts are provided by serine 37 and threonine 59.

This sequence belongs to the TRAFAC class TrmE-Era-EngA-EngB-Septin-like GTPase superfamily. EngB GTPase family. Requires Mg(2+) as cofactor.

Functionally, necessary for normal cell division and for the maintenance of normal septation. The chain is Probable GTP-binding protein EngB from Geobacillus kaustophilus (strain HTA426).